Reading from the N-terminus, the 435-residue chain is Nuclear hormone receptor family member nhr-14 (435 aa).

The segment at residues 17-92 (ADFCVVCGDK…DGMKPEAIQN (76 aa)) is a DNA-binding region (nuclear receptor). NR C4-type zinc fingers lie at residues 20–40 (CVVC…CNGC) and 56–80 (CRFN…FQKC). Positions 91 to 126 (QNERDRIGSTKRRKRSGANSENNSDSEGTPSPKIEV) are disordered. Over residues 107-119 (GANSENNSDSEGT) the composition is skewed to polar residues. The NR LBD domain maps to 131-355 (VSRKLIEMLL…KRDTISPKIE (225 aa)).

This sequence belongs to the nuclear hormone receptor family. In terms of tissue distribution, expressed in intestine and head neurons in young adults.

It localises to the nucleus. Its function is as follows. Orphan nuclear receptor. Transcriptional repressor of intestinal metal transporter smf-3 and genes of the innate immune response. Inhibits nuclear localization of transcription factor pqm-1; in response to pathogen stress, may facilitate translocation of pqm-1, leading to transcriptional activation of genes involved in innate immunity and iron uptake. The sequence is that of Nuclear hormone receptor family member nhr-14 (nhr-14) from Caenorhabditis elegans.